The sequence spans 139 residues: Protein archease (139 aa).

3 residues coordinate Ca(2+): D12, D138, and I139.

The protein belongs to the archease family.

In terms of biological role, activates the tRNA-splicing ligase complex by facilitating the enzymatic turnover of catalytic subunit RtcB. Acts by promoting the guanylylation of RtcB, a key intermediate step in tRNA ligation. Can also alter the NTP specificity of RtcB such that ATP, dGTP or ITP is used efficiently. This is Protein archease from Sulfolobus acidocaldarius (strain ATCC 33909 / DSM 639 / JCM 8929 / NBRC 15157 / NCIMB 11770).